Reading from the N-terminus, the 287-residue chain is Nucleotide-binding protein Hhal_2130 (287 aa).

11-18 (GLSGSGKS) provides a ligand contact to ATP. Residue 63 to 66 (DARN) participates in GTP binding.

Belongs to the RapZ-like family.

Its function is as follows. Displays ATPase and GTPase activities. The chain is Nucleotide-binding protein Hhal_2130 from Halorhodospira halophila (strain DSM 244 / SL1) (Ectothiorhodospira halophila (strain DSM 244 / SL1)).